The following is a 266-amino-acid chain: Chymotrypsin-like elastase family member 1 (266 aa).

A signal peptide spans 1-16 (MLRFLVLATLVLYGHS). Residues 17 to 26 (TRDFPETNAR) constitute a propeptide, activation peptide. Positions 27–264 (VVGGTEARKN…YISWINNVIA (238 aa)) constitute a Peptidase S1 domain. Cysteine 56 and cysteine 72 are disulfide-bonded. Histidine 71 functions as the Charge relay system in the catalytic mechanism. Ca(2+)-binding residues include glutamate 85, asparagine 87, glutamine 90, and glutamate 95. Asparagine 87 carries an N-linked (GlcNAc...) asparagine glycan. Residue aspartate 119 is the Charge relay system of the active site. 3 disulfides stabilise this stretch: cysteine 153–cysteine 220, cysteine 184–cysteine 200, and cysteine 210–cysteine 240. The Charge relay system role is filled by serine 214. An N-linked (GlcNAc...) asparagine glycan is attached at asparagine 241.

It belongs to the peptidase S1 family. Elastase subfamily. It depends on Ca(2+) as a cofactor.

The protein resides in the secreted. It carries out the reaction Hydrolysis of proteins, including elastin. Preferential cleavage: Ala-|-Xaa.. Serine proteases that hydrolyze many proteins in addition to elastin. The protein is Chymotrypsin-like elastase family member 1 (CELA1) of Felis catus (Cat).